A 286-amino-acid polypeptide reads, in one-letter code: 33 kDa chaperonin (286 aa).

Cystine bridges form between C225–C227 and C258–C261.

The protein belongs to the HSP33 family. In terms of processing, under oxidizing conditions two disulfide bonds are formed involving the reactive cysteines. Under reducing conditions zinc is bound to the reactive cysteines and the protein is inactive.

It localises to the cytoplasm. Redox regulated molecular chaperone. Protects both thermally unfolding and oxidatively damaged proteins from irreversible aggregation. Plays an important role in the bacterial defense system toward oxidative stress. This is 33 kDa chaperonin from Shewanella frigidimarina (strain NCIMB 400).